The chain runs to 122 residues: Large ribosomal subunit protein bL12 (122 aa).

It belongs to the bacterial ribosomal protein bL12 family. As to quaternary structure, homodimer. Part of the ribosomal stalk of the 50S ribosomal subunit. Forms a multimeric L10(L12)X complex, where L10 forms an elongated spine to which 2 to 4 L12 dimers bind in a sequential fashion. Binds GTP-bound translation factors.

Functionally, forms part of the ribosomal stalk which helps the ribosome interact with GTP-bound translation factors. Is thus essential for accurate translation. This chain is Large ribosomal subunit protein bL12, found in Buchnera aphidicola subsp. Baizongia pistaciae (strain Bp).